A 1150-amino-acid chain; its full sequence is PAN2-PAN3 deadenylation complex catalytic subunit pan2 (1150 aa).

2 WD repeats span residues 96–139 (AHEE…DKLH) and 270–309 (ANVSFMLGIDLSPSGEALAINDAECAIHLWGSPAKVHFNE). The tract at residues 310 to 446 (MSKEAEFGDV…GAKINGETDD (137 aa)) is linker. Residues 447-816 (DPLLKYSNVE…IPCVLAYQVQ (370 aa)) enclose the USP domain. The 179-residue stretch at 865–1043 (VALDTEFVDL…IEDARMALRL (179 aa)) folds into the Exonuclease domain. Residues aspartate 868, glutamate 870, aspartate 977, and aspartate 1036 each contribute to the a divalent metal cation site. Residues 1074–1150 (PPPRNGVPTV…GDFFSGSPLK (77 aa)) form a disordered region. The segment covering 1091–1106 (VTMQNNSGRNTPSTSD) has biased composition (polar residues). Low complexity predominate over residues 1108–1120 (AGAAASAPATPRQ).

The protein belongs to the peptidase C19 family. PAN2 subfamily. As to quaternary structure, forms a heterotrimer with an asymmetric homodimer of the regulatory subunit pan3 to form the poly(A)-nuclease (PAN) deadenylation complex. It depends on a divalent metal cation as a cofactor.

Its subcellular location is the cytoplasm. The enzyme catalyses Exonucleolytic cleavage of poly(A) to 5'-AMP.. Its activity is regulated as follows. Positively regulated by the regulatory subunit pan3. Its function is as follows. Catalytic subunit of the poly(A)-nuclease (PAN) deadenylation complex, one of two cytoplasmic mRNA deadenylases involved in mRNA turnover. PAN specifically shortens poly(A) tails of RNA and the activity is stimulated by poly(A)-binding protein pab1. PAN deadenylation is followed by rapid degradation of the shortened mRNA tails by the CCR4-NOT complex. Deadenylated mRNAs are then degraded by two alternative mechanisms, namely exosome-mediated 3'-5' exonucleolytic degradation, or deadenylation-dependent mRNA decaping and subsequent 5'-3' exonucleolytic degradation by xrn1. May also be involved in post-transcriptional maturation of mRNA poly(A) tails. This chain is PAN2-PAN3 deadenylation complex catalytic subunit pan2, found in Aspergillus niger (strain ATCC MYA-4892 / CBS 513.88 / FGSC A1513).